We begin with the raw amino-acid sequence, 147 residues long: Ubiquitin-conjugating enzyme E2 D4 (147 aa).

The UBC core domain occupies 1-147 (MALKRIQKEL…AREWTQKYAM (147 aa)). Cys85 acts as the Glycyl thioester intermediate in catalysis.

It belongs to the ubiquitin-conjugating enzyme family. Interacts with map3k10/mlk2. As to expression, at embryonic stages 28 to 35, expressed in the somites, eye primordia, otic vesicle and branchial arches. By stage 35, also weakly expressed in the pronephros.

It catalyses the reaction S-ubiquitinyl-[E1 ubiquitin-activating enzyme]-L-cysteine + [E2 ubiquitin-conjugating enzyme]-L-cysteine = [E1 ubiquitin-activating enzyme]-L-cysteine + S-ubiquitinyl-[E2 ubiquitin-conjugating enzyme]-L-cysteine.. It participates in protein modification; protein ubiquitination. In terms of biological role, catalyzes the covalent attachment of ubiquitin to other proteins. Regulates pronephros development, possibly by promoting ubiquitination and thus inactivation or degradation of map3k10/mlk2. This Xenopus laevis (African clawed frog) protein is Ubiquitin-conjugating enzyme E2 D4 (ube2d4).